Here is a 75-residue protein sequence, read N- to C-terminus: MAKLKKSLFLVLFLGLVSLSICEEEKREEENEEVQEDDDQSEEKRGFLDVVKHVGKAVGKAALNAVTEMVNQAEQ.

A signal peptide spans Met1–Cys22. Positions Glu23–Glu43 are excised as a propeptide. A disordered region spans residues Glu25–Lys44. The segment covering Glu30–Ser41 has biased composition (acidic residues).

As to expression, expressed by the skin glands.

It is found in the secreted. Functionally, has antimicrobial activity. This is Cruzioseptin-7 from Cruziohyla calcarifer (Splendid leaf frog).